We begin with the raw amino-acid sequence, 444 residues long: P2X purinoceptor 5 (444 aa).

Residues Met1–Gly30 lie on the Cytoplasmic side of the membrane. A helical membrane pass occupies residues Leu31 to Ile51. The Extracellular segment spans residues Lys52–Arg319. Asn77 carries N-linked (GlcNAc...) asparagine glycosylation. Intrachain disulfides connect Cys118/Cys169, Cys129/Cys152, and Cys135/Cys163. Asn202 carries N-linked (GlcNAc...) asparagine glycosylation. Intrachain disulfides connect Cys220–Cys229 and Cys263–Cys272. Residues Phe320–Ile362 form a helical membrane-spanning segment. At Lys363 to Thr444 the chain is on the cytoplasmic side. The segment at Gly378–Thr444 is disordered.

Belongs to the P2X receptor family. As to quaternary structure, functional P2XRs are organized as homomeric and heteromeric trimers. Homotrimer. Forms heterotrimer with P2RX1. In terms of tissue distribution, expressed at high levels in brain and immune system.

Its subcellular location is the cell membrane. The enzyme catalyses Na(+)(in) = Na(+)(out). The catalysed reaction is Ca(2+)(in) = Ca(2+)(out). It carries out the reaction chloride(in) = chloride(out). Its activity is regulated as follows. Activated by ATP. Slowly desensitizing. Sensitive to the ATP agonist alpha/beta-methylene-ATP. Its function is as follows. ATP-gated nonselective transmembrane cation channel permeable to potassium, sodium and calcium. Unlike other P2RX receptors, the P2X5 receptor is also permeable to chloride. May play a supporting role in the inflammatory response. Non-functional. The polypeptide is P2X purinoceptor 5 (Homo sapiens (Human)).